A 156-amino-acid chain; its full sequence is Cyanate hydratase (156 aa).

Residues arginine 96, glutamate 99, and serine 122 contribute to the active site.

This sequence belongs to the cyanase family.

The catalysed reaction is cyanate + hydrogencarbonate + 3 H(+) = NH4(+) + 2 CO2. Catalyzes the reaction of cyanate with bicarbonate to produce ammonia and carbon dioxide. The polypeptide is Cyanate hydratase (Escherichia coli O7:K1 (strain IAI39 / ExPEC)).